Here is a 502-residue protein sequence, read N- to C-terminus: ATP synthase subunit alpha (502 aa).

169 to 176 (GDRQTGKT) serves as a coordination point for ATP.

Belongs to the ATPase alpha/beta chains family. In terms of assembly, F-type ATPases have 2 components, CF(1) - the catalytic core - and CF(0) - the membrane proton channel. CF(1) has five subunits: alpha(3), beta(3), gamma(1), delta(1), epsilon(1). CF(0) has three main subunits: a(1), b(2) and c(9-12). The alpha and beta chains form an alternating ring which encloses part of the gamma chain. CF(1) is attached to CF(0) by a central stalk formed by the gamma and epsilon chains, while a peripheral stalk is formed by the delta and b chains.

It localises to the cell membrane. It catalyses the reaction ATP + H2O + 4 H(+)(in) = ADP + phosphate + 5 H(+)(out). In terms of biological role, produces ATP from ADP in the presence of a proton gradient across the membrane. The alpha chain is a regulatory subunit. In Exiguobacterium sibiricum (strain DSM 17290 / CCUG 55495 / CIP 109462 / JCM 13490 / 255-15), this protein is ATP synthase subunit alpha.